The chain runs to 289 residues: Phosphatidylserine decarboxylase proenzyme (289 aa).

Residues Asp92, His149, and Ser254 each act as charge relay system; for autoendoproteolytic cleavage activity in the active site. Ser254 acts as the Schiff-base intermediate with substrate; via pyruvic acid; for decarboxylase activity in catalysis. Ser254 bears the Pyruvic acid (Ser); by autocatalysis mark.

This sequence belongs to the phosphatidylserine decarboxylase family. PSD-B subfamily. Prokaryotic type I sub-subfamily. As to quaternary structure, heterodimer of a large membrane-associated beta subunit and a small pyruvoyl-containing alpha subunit. Pyruvate is required as a cofactor. In terms of processing, is synthesized initially as an inactive proenzyme. Formation of the active enzyme involves a self-maturation process in which the active site pyruvoyl group is generated from an internal serine residue via an autocatalytic post-translational modification. Two non-identical subunits are generated from the proenzyme in this reaction, and the pyruvate is formed at the N-terminus of the alpha chain, which is derived from the carboxyl end of the proenzyme. The autoendoproteolytic cleavage occurs by a canonical serine protease mechanism, in which the side chain hydroxyl group of the serine supplies its oxygen atom to form the C-terminus of the beta chain, while the remainder of the serine residue undergoes an oxidative deamination to produce ammonia and the pyruvoyl prosthetic group on the alpha chain. During this reaction, the Ser that is part of the protease active site of the proenzyme becomes the pyruvoyl prosthetic group, which constitutes an essential element of the active site of the mature decarboxylase.

Its subcellular location is the cell membrane. It catalyses the reaction a 1,2-diacyl-sn-glycero-3-phospho-L-serine + H(+) = a 1,2-diacyl-sn-glycero-3-phosphoethanolamine + CO2. It participates in phospholipid metabolism; phosphatidylethanolamine biosynthesis; phosphatidylethanolamine from CDP-diacylglycerol: step 2/2. In terms of biological role, catalyzes the formation of phosphatidylethanolamine (PtdEtn) from phosphatidylserine (PtdSer). In Pseudomonas aeruginosa (strain ATCC 15692 / DSM 22644 / CIP 104116 / JCM 14847 / LMG 12228 / 1C / PRS 101 / PAO1), this protein is Phosphatidylserine decarboxylase proenzyme.